The sequence spans 228 residues: Biosynthetic peptidoglycan transglycosylase (228 aa).

The helical transmembrane segment at 8-28 (ILAALVAAFLLYNLWVLGHII) threads the bilayer.

The protein belongs to the glycosyltransferase 51 family.

It is found in the cell inner membrane. It carries out the reaction [GlcNAc-(1-&gt;4)-Mur2Ac(oyl-L-Ala-gamma-D-Glu-L-Lys-D-Ala-D-Ala)](n)-di-trans,octa-cis-undecaprenyl diphosphate + beta-D-GlcNAc-(1-&gt;4)-Mur2Ac(oyl-L-Ala-gamma-D-Glu-L-Lys-D-Ala-D-Ala)-di-trans,octa-cis-undecaprenyl diphosphate = [GlcNAc-(1-&gt;4)-Mur2Ac(oyl-L-Ala-gamma-D-Glu-L-Lys-D-Ala-D-Ala)](n+1)-di-trans,octa-cis-undecaprenyl diphosphate + di-trans,octa-cis-undecaprenyl diphosphate + H(+). Its pathway is cell wall biogenesis; peptidoglycan biosynthesis. Its function is as follows. Peptidoglycan polymerase that catalyzes glycan chain elongation from lipid-linked precursors. The sequence is that of Biosynthetic peptidoglycan transglycosylase from Chromobacterium violaceum (strain ATCC 12472 / DSM 30191 / JCM 1249 / CCUG 213 / NBRC 12614 / NCIMB 9131 / NCTC 9757 / MK).